A 218-amino-acid polypeptide reads, in one-letter code: Octanoyltransferase (218 aa).

The BPL/LPL catalytic domain occupies 27-210; the sequence is TGGEDTLYLV…QFLAIFTHPA (184 aa). Residues 72 to 79, 139 to 141, and 152 to 154 contribute to the substrate site; these read RGGNITCH, SIG, and GLA. C170 functions as the Acyl-thioester intermediate in the catalytic mechanism.

Belongs to the LipB family.

The protein localises to the cytoplasm. It catalyses the reaction octanoyl-[ACP] + L-lysyl-[protein] = N(6)-octanoyl-L-lysyl-[protein] + holo-[ACP] + H(+). Its pathway is protein modification; protein lipoylation via endogenous pathway; protein N(6)-(lipoyl)lysine from octanoyl-[acyl-carrier-protein]: step 1/2. Its function is as follows. Catalyzes the transfer of endogenously produced octanoic acid from octanoyl-acyl-carrier-protein onto the lipoyl domains of lipoate-dependent enzymes. Lipoyl-ACP can also act as a substrate although octanoyl-ACP is likely to be the physiological substrate. This is Octanoyltransferase from Nitratidesulfovibrio vulgaris (strain ATCC 29579 / DSM 644 / CCUG 34227 / NCIMB 8303 / VKM B-1760 / Hildenborough) (Desulfovibrio vulgaris).